The primary structure comprises 286 residues: Meteorin-like protein (286 aa).

The signal sequence occupies residues 1–21 (MLSPFLAYLLSVVLLCRIARS). Disulfide bonds link Cys-28/Cys-51, Cys-84/Cys-120, Cys-165/Cys-235, Cys-168/Cys-259, and Cys-178/Cys-281.

This sequence belongs to the meteorin family.

It is found in the secreted. Functionally, hormone induced following exercise or cold exposure that promotes energy expenditure. Induced either in the skeletal muscle after exercise or in adipose tissue following cold exposure and is present in the circulation. Able to stimulate energy expenditure associated with the browning of the white fat depots and improves glucose tolerance. The chain is Meteorin-like protein (metrnl) from Danio rerio (Zebrafish).